Consider the following 183-residue polypeptide: Putative 3-methyladenine DNA glycosylase (183 aa).

It belongs to the DNA glycosylase MPG family.

This Legionella pneumophila (strain Corby) protein is Putative 3-methyladenine DNA glycosylase.